A 445-amino-acid polypeptide reads, in one-letter code: Histidine--tRNA ligase (445 aa).

It belongs to the class-II aminoacyl-tRNA synthetase family. Homodimer.

Its subcellular location is the cytoplasm. It catalyses the reaction tRNA(His) + L-histidine + ATP = L-histidyl-tRNA(His) + AMP + diphosphate + H(+). This chain is Histidine--tRNA ligase, found in Mycoplasma mobile (strain ATCC 43663 / 163K / NCTC 11711) (Mesomycoplasma mobile).